A 385-amino-acid polypeptide reads, in one-letter code: GTPase Obg (385 aa).

Positions M1–L159 constitute an Obg domain. The 174-residue stretch at A160–E333 folds into the OBG-type G domain. Residues G166–S173, F191–I195, D213–G216, N283–D286, and S314–I316 each bind GTP. S173 and T193 together coordinate Mg(2+).

The protein belongs to the TRAFAC class OBG-HflX-like GTPase superfamily. OBG GTPase family. In terms of assembly, monomer. Mg(2+) is required as a cofactor.

The protein localises to the cytoplasm. An essential GTPase which binds GTP, GDP and possibly (p)ppGpp with moderate affinity, with high nucleotide exchange rates and a fairly low GTP hydrolysis rate. Plays a role in control of the cell cycle, stress response, ribosome biogenesis and in those bacteria that undergo differentiation, in morphogenesis control. The chain is GTPase Obg from Pseudoalteromonas translucida (strain TAC 125).